Here is a 159-residue protein sequence, read N- to C-terminus: uncharacterized protein (159 aa).

Belongs to the IIV-6 136R family.

This is an uncharacterized protein from Invertebrate iridescent virus 3 (IIV-3).